The primary structure comprises 190 residues: Potassium-transporting ATPase KdpC subunit (190 aa).

Residues 10 to 30 (LLVFLTILTGGVYPLATTVLG) traverse the membrane as a helical segment.

This sequence belongs to the KdpC family. In terms of assembly, the system is composed of three essential subunits: KdpA, KdpB and KdpC.

Its subcellular location is the cell inner membrane. Its function is as follows. Part of the high-affinity ATP-driven potassium transport (or Kdp) system, which catalyzes the hydrolysis of ATP coupled with the electrogenic transport of potassium into the cytoplasm. This subunit acts as a catalytic chaperone that increases the ATP-binding affinity of the ATP-hydrolyzing subunit KdpB by the formation of a transient KdpB/KdpC/ATP ternary complex. The polypeptide is Potassium-transporting ATPase KdpC subunit (Cronobacter sakazakii (strain ATCC BAA-894) (Enterobacter sakazakii)).